A 421-amino-acid polypeptide reads, in one-letter code: UDP-N-acetylglucosamine 1-carboxyvinyltransferase (421 aa).

22-23 (KN) serves as a coordination point for phosphoenolpyruvate. Position 93 (Arg-93) interacts with UDP-N-acetyl-alpha-D-glucosamine. Catalysis depends on Cys-117, which acts as the Proton donor. The residue at position 117 (Cys-117) is a 2-(S-cysteinyl)pyruvic acid O-phosphothioketal. Residues 122-126 (RPVDL), Asp-308, and Ile-330 contribute to the UDP-N-acetyl-alpha-D-glucosamine site.

This sequence belongs to the EPSP synthase family. MurA subfamily.

It is found in the cytoplasm. It catalyses the reaction phosphoenolpyruvate + UDP-N-acetyl-alpha-D-glucosamine = UDP-N-acetyl-3-O-(1-carboxyvinyl)-alpha-D-glucosamine + phosphate. The protein operates within cell wall biogenesis; peptidoglycan biosynthesis. In terms of biological role, cell wall formation. Adds enolpyruvyl to UDP-N-acetylglucosamine. The polypeptide is UDP-N-acetylglucosamine 1-carboxyvinyltransferase (Pseudomonas putida (strain ATCC 700007 / DSM 6899 / JCM 31910 / BCRC 17059 / LMG 24140 / F1)).